Consider the following 581-residue polypeptide: Penicillin-binding protein activator LpoA (581 aa).

An N-terminal signal peptide occupies residues 1–26 (MLSILMQGLRLKKCFLPILVMFFLAG). A lipid anchor (N-palmitoyl cysteine) is attached at Cys-27. Residue Cys-27 is the site of S-diacylglycerol cysteine attachment.

The protein belongs to the LpoA family. Interacts with PBP1a.

The protein resides in the cell outer membrane. Regulator of peptidoglycan synthesis that is essential for the function of penicillin-binding protein 1A (PBP1a). The sequence is that of Penicillin-binding protein activator LpoA from Histophilus somni (strain 129Pt) (Haemophilus somnus).